The following is a 535-amino-acid chain: Tetrathionate hydrolase (535 aa).

The N-terminal stretch at 1-39 (MNLKILVGLFILGIIILSAMTFLNFTTIVAQDKGDQQPK) is a signal peptide. A glycan (N-linked (GlcNAc...) asparagine) is linked at asparagine 50.

The protein belongs to the tetrathionate hydrolase family. As to quaternary structure, monomer and homodimer; in equilibrium.

Its subcellular location is the cell surface. It catalyses the reaction tetrathionate + H2O = sulfur + thiosulfate + sulfate + H(+). Catalyzes the hydrolysis of tetrathionate to generate elemental sulfur, thiosulfate and sulfate. The chain is Tetrathionate hydrolase from Acidianus ambivalens (Desulfurolobus ambivalens).